A 376-amino-acid chain; its full sequence is Transcription initiation factor IIA subunit 1 (376 aa).

Ala-2 carries the post-translational modification N-acetylalanine. Low complexity-rich tracts occupy residues 69–79 (QVQQQHQPQQQ) and 89–105 (QAQP…TQQV). Disordered regions lie at residues 69-107 (QVQQ…QVLI), 246-265 (AQAQ…PAQT), and 274-329 (DGTG…QELF). A phosphoserine; by TAF1 mark is found at Ser-280, Ser-281, Ser-316, and Ser-321. Residues 280-329 (SSEEDEDEEEDYDDDEEEDKEKDGAEDGQVEEEPLNSEDDVSDEEGQELF) are compositionally biased toward acidic residues. Positions 343 and 344 each coordinate DNA.

Belongs to the TFIIA subunit 1 family. In terms of assembly, TFIIA is a heterodimer of the large unprocessed subunit 1 and a small subunit gamma. It was originally believed to be a heterotrimer of an alpha (p35), a beta (p19) and a gamma subunit (p12). TFIIA forms a complex with TBP. Part of TBP-based Pol II pre-initiation complex (PIC), in which Pol II core assembles with general transcription factors and other specific initiation factors including GTF2E1, GTF2E2, GTF2F1, GTF2F2, TCEA1, ERCC2, ERCC3, GTF2H2, GTF2H3, GTF2H4, GTF2H5, GTF2A1, GTF2A2, GTF2B and TBP; this large multi-subunit PIC complex mediates DNA unwinding and targets Pol II core to the transcription start site where the first phosphodiester bond forms. Post-translationally, the alpha and beta subunits are postranslationally produced from the precursor formby TASP1. The cleavage promotes proteasomal degradation.

It localises to the nucleus. Functionally, TFIIA is a component of the transcription machinery of RNA polymerase II and plays an important role in transcriptional activation. TFIIA in a complex with TBP mediates transcriptional activity. The sequence is that of Transcription initiation factor IIA subunit 1 (GTF2A1) from Pongo abelii (Sumatran orangutan).